Here is a 350-residue protein sequence, read N- to C-terminus: Ion-translocating oxidoreductase complex subunit D (350 aa).

3 helical membrane passes run 25 to 45 (ALCL…GSLI), 89 to 109 (IPPL…IIIV), and 124 to 144 (AMAG…SWVA). Thr-185 carries the FMN phosphoryl threonine modification. The next 5 helical transmembrane spans lie at 212–232 (SYGV…LVLL), 239–259 (WHIS…GFLI), 265–285 (VSPL…FIAT), 298–318 (LIFG…GGYP), and 319–339 (DAVA…DHYV).

The protein belongs to the NqrB/RnfD family. In terms of assembly, the complex is composed of six subunits: RnfA, RnfB, RnfC, RnfD, RnfE and RnfG. It depends on FMN as a cofactor.

The protein localises to the cell inner membrane. Functionally, part of a membrane-bound complex that couples electron transfer with translocation of ions across the membrane. This Shewanella denitrificans (strain OS217 / ATCC BAA-1090 / DSM 15013) protein is Ion-translocating oxidoreductase complex subunit D.